The primary structure comprises 226 residues: 7-cyano-7-deazaguanine synthase (226 aa).

Position 10–20 (10–20) interacts with ATP; it reads FSGGQDSTTLA. Cysteine 190, cysteine 205, cysteine 208, and cysteine 211 together coordinate Zn(2+).

Belongs to the QueC family. It depends on Zn(2+) as a cofactor.

The enzyme catalyses 7-carboxy-7-deazaguanine + NH4(+) + ATP = 7-cyano-7-deazaguanine + ADP + phosphate + H2O + H(+). It participates in purine metabolism; 7-cyano-7-deazaguanine biosynthesis. In terms of biological role, catalyzes the ATP-dependent conversion of 7-carboxy-7-deazaguanine (CDG) to 7-cyano-7-deazaguanine (preQ(0)). The chain is 7-cyano-7-deazaguanine synthase from Helicobacter pylori (strain ATCC 700392 / 26695) (Campylobacter pylori).